Here is a 113-residue protein sequence, read N- to C-terminus: MPQNRKLGRDSAHRNLMLRNLVTSLFKSGRIQTTEPKAKETRRAAEKMITLAKRGDLHARRQALAYMTEETVVTNLFEEIAPKYQDRNGGYTRIMKLGPRQGDAAEVCILELV.

It belongs to the bacterial ribosomal protein bL17 family. As to quaternary structure, part of the 50S ribosomal subunit. Contacts protein L32.

This Alkaliphilus metalliredigens (strain QYMF) protein is Large ribosomal subunit protein bL17.